The sequence spans 403 residues: Protein-export membrane protein SecD (403 aa).

The next 6 helical transmembrane spans lie at 13–33, 245–265, 285–305, 306–326, 347–367, and 368–388; these read LLVI…KGVN, FLKM…VIIA, VVFL…PALA, GIIL…DEIV, VVLA…VAGM, and GLLK…VVIT.

This sequence belongs to the SecD/SecF family. SecD subfamily. In terms of assembly, part of the protein translocation apparatus. Forms a complex with SecF.

It is found in the cell membrane. Functionally, involved in protein export. The polypeptide is Protein-export membrane protein SecD (Methanopyrus kandleri (strain AV19 / DSM 6324 / JCM 9639 / NBRC 100938)).